A 141-amino-acid polypeptide reads, in one-letter code: Nucleoside diphosphate kinase (141 aa).

K11, F59, R87, T93, R104, and N114 together coordinate ATP. The Pros-phosphohistidine intermediate role is filled by H117.

Belongs to the NDK family. As to quaternary structure, homotetramer. The cofactor is Mg(2+).

The protein resides in the cytoplasm. It catalyses the reaction a 2'-deoxyribonucleoside 5'-diphosphate + ATP = a 2'-deoxyribonucleoside 5'-triphosphate + ADP. It carries out the reaction a ribonucleoside 5'-diphosphate + ATP = a ribonucleoside 5'-triphosphate + ADP. Major role in the synthesis of nucleoside triphosphates other than ATP. The ATP gamma phosphate is transferred to the NDP beta phosphate via a ping-pong mechanism, using a phosphorylated active-site intermediate. The chain is Nucleoside diphosphate kinase from Vibrio parahaemolyticus serotype O3:K6 (strain RIMD 2210633).